A 170-amino-acid polypeptide reads, in one-letter code: Universal stress protein MJ0531 (170 aa).

It belongs to the universal stress protein A family.

The protein is Universal stress protein MJ0531 of Methanocaldococcus jannaschii (strain ATCC 43067 / DSM 2661 / JAL-1 / JCM 10045 / NBRC 100440) (Methanococcus jannaschii).